The primary structure comprises 150 residues: Ribosomal RNA large subunit methyltransferase H (150 aa).

Residues alanine 100 and 118 to 123 (LSEMTF) each bind S-adenosyl-L-methionine.

It belongs to the RNA methyltransferase RlmH family. As to quaternary structure, homodimer.

The protein resides in the cytoplasm. The catalysed reaction is pseudouridine(1915) in 23S rRNA + S-adenosyl-L-methionine = N(3)-methylpseudouridine(1915) in 23S rRNA + S-adenosyl-L-homocysteine + H(+). Its function is as follows. Specifically methylates the pseudouridine at position 1915 (m3Psi1915) in 23S rRNA. The chain is Ribosomal RNA large subunit methyltransferase H from Helicobacter pylori (strain P12).